The primary structure comprises 280 residues: Large ribosomal subunit protein uL2 (280 aa).

The interval 229 to 280 (DHPHGGGEGKAPIGHPSPLTPWGKPTLGYKTRKKRKPSDRFIIQRANDKKEK) is disordered.

This sequence belongs to the universal ribosomal protein uL2 family. Part of the 50S ribosomal subunit. Forms a bridge to the 30S subunit in the 70S ribosome.

In terms of biological role, one of the primary rRNA binding proteins. Required for association of the 30S and 50S subunits to form the 70S ribosome, for tRNA binding and peptide bond formation. It has been suggested to have peptidyltransferase activity; this is somewhat controversial. Makes several contacts with the 16S rRNA in the 70S ribosome. This is Large ribosomal subunit protein uL2 from Dictyoglomus turgidum (strain DSM 6724 / Z-1310).